A 351-amino-acid chain; its full sequence is UDP-3-O-acylglucosamine N-acyltransferase (351 aa).

The active-site Proton acceptor is H257.

It belongs to the transferase hexapeptide repeat family. LpxD subfamily. In terms of assembly, homotrimer.

The catalysed reaction is a UDP-3-O-[(3R)-3-hydroxyacyl]-alpha-D-glucosamine + a (3R)-hydroxyacyl-[ACP] = a UDP-2-N,3-O-bis[(3R)-3-hydroxyacyl]-alpha-D-glucosamine + holo-[ACP] + H(+). It functions in the pathway bacterial outer membrane biogenesis; LPS lipid A biosynthesis. Catalyzes the N-acylation of UDP-3-O-acylglucosamine using 3-hydroxyacyl-ACP as the acyl donor. Is involved in the biosynthesis of lipid A, a phosphorylated glycolipid that anchors the lipopolysaccharide to the outer membrane of the cell. The sequence is that of UDP-3-O-acylglucosamine N-acyltransferase from Brucella abortus (strain S19).